Consider the following 151-residue polypeptide: UPF0178 protein YaiI (151 aa).

This sequence belongs to the UPF0178 family.

The sequence is that of UPF0178 protein YaiI from Salmonella paratyphi C (strain RKS4594).